We begin with the raw amino-acid sequence, 235 residues long: Large ribosomal subunit protein uL1 (235 aa).

The protein belongs to the universal ribosomal protein uL1 family. As to quaternary structure, part of the 50S ribosomal subunit.

Its function is as follows. Binds directly to 23S rRNA. The L1 stalk is quite mobile in the ribosome, and is involved in E site tRNA release. Functionally, protein L1 is also a translational repressor protein, it controls the translation of the L11 operon by binding to its mRNA. The protein is Large ribosomal subunit protein uL1 of Prochlorococcus marinus (strain MIT 9215).